A 292-amino-acid chain; its full sequence is MTEFDLSTREGRWKHFGSVDPVKGTKPTTKNEMTDLQSTHKNFLFEIEEVGIKNLTYPVLIDQYQTAGLFSFSTSLNKNEKGINMSRILESVEKHYDNGIELEFNTLHQLLRTLQDKMNQNAAGVDVSGKWFFDRYSPVTNIKAVGHADVTYGLAIENHTVTRKELTIQAKVTTLCPCSKEISEYSAHNQRGIVTVKAYLDKNNDVIDDYKDKILDAMEANASSILYPILKRPDEKRVTERAYENPRFVEDLIRLIAADLVEFDWIEGFDIECRNEESIHQHDAFARLKYRK.

It belongs to the GTP cyclohydrolase IV family.

The catalysed reaction is GTP + H2O = 7,8-dihydroneopterin 3'-triphosphate + formate + H(+). It participates in cofactor biosynthesis; 7,8-dihydroneopterin triphosphate biosynthesis; 7,8-dihydroneopterin triphosphate from GTP: step 1/1. Its function is as follows. Converts GTP to 7,8-dihydroneopterin triphosphate. In Staphylococcus epidermidis (strain ATCC 12228 / FDA PCI 1200), this protein is GTP cyclohydrolase FolE2.